The primary structure comprises 350 residues: tRNA uridine(34) hydroxylase (350 aa).

Positions 146-240 (DDPDALFIDM…YARKAREQGL (95 aa)) constitute a Rhodanese domain. Residue cysteine 200 is the Cysteine persulfide intermediate of the active site.

Belongs to the TrhO family.

It catalyses the reaction uridine(34) in tRNA + AH2 + O2 = 5-hydroxyuridine(34) in tRNA + A + H2O. Functionally, catalyzes oxygen-dependent 5-hydroxyuridine (ho5U) modification at position 34 in tRNAs, the first step in 5-carboxymethoxyuridine (cmo5U) biosynthesis. May be part of an alternate pathway, which is able to bypass cmo5U biogenesis in a subset of tRNAs under aerobic conditions. This chain is tRNA uridine(34) hydroxylase, found in Escherichia coli O17:K52:H18 (strain UMN026 / ExPEC).